The chain runs to 681 residues: Macrolide export ATP-binding/permease protein MacB (681 aa).

The region spanning 6-244 (LKLAAVTRRF…FAEVGVGAAA (239 aa)) is the ABC transporter domain. 42-49 (GASGSGKS) serves as a coordination point for ATP. Positions 246 to 273 (TETAADTRSAPASGDAPPPANNDTAADP) are enriched in low complexity. The interval 246 to 298 (TETAADTRSAPASGDAPPPANNDTAADPAPAPDASPPAPAVSPKHAGWRGSRS) is disordered. A compositionally biased stretch (pro residues) spans 274–285 (APAPDASPPAPA). Helical transmembrane passes span 306–326 (CLTM…VAVG), 554–574 (LTLL…IGVM), 611–631 (LVCL…GALF), and 644–664 (AGAI…FGFM).

Belongs to the ABC transporter superfamily. Macrolide exporter (TC 3.A.1.122) family. In terms of assembly, homodimer.

It localises to the cell inner membrane. Functionally, non-canonical ABC transporter that contains transmembrane domains (TMD), which form a pore in the inner membrane, and an ATP-binding domain (NBD), which is responsible for energy generation. Confers resistance against macrolides. The chain is Macrolide export ATP-binding/permease protein MacB from Burkholderia orbicola (strain AU 1054).